Consider the following 476-residue polypeptide: Adenosylhomocysteinase (476 aa).

The substrate site is built by Thr62, Asp141, and Glu201. An NAD(+)-binding site is contributed by 202–204; the sequence is TTT. The substrate site is built by Lys231 and Asp235. NAD(+) contacts are provided by residues Asn236, 265–270, Glu288, Asn323, 344–346, and Asn389; these read GYGDVG and IGH.

The protein belongs to the adenosylhomocysteinase family. Requires NAD(+) as cofactor.

Its subcellular location is the cytoplasm. It carries out the reaction S-adenosyl-L-homocysteine + H2O = L-homocysteine + adenosine. Its pathway is amino-acid biosynthesis; L-homocysteine biosynthesis; L-homocysteine from S-adenosyl-L-homocysteine: step 1/1. May play a key role in the regulation of the intracellular concentration of adenosylhomocysteine. The protein is Adenosylhomocysteinase of Myxococcus xanthus (strain DK1622).